Reading from the N-terminus, the 235-residue chain is Octanoyltransferase LIP2, mitochondrial (235 aa).

Residues 1-32 (MRSPRTLEVWKLGTVNYLKSLKLQEKLVSERK) constitute a mitochondrion transit peptide. The region spanning 34–218 (HQIPDTLLSL…CLAKAFSYDD (185 aa)) is the BPL/LPL catalytic domain. Substrate-binding positions include 79-86 (RGGDITFH), 147-149 (AIG), and 160-162 (GLA). Cys-178 acts as the Acyl-thioester intermediate in catalysis.

This sequence belongs to the LipB family. As to expression, expressed in leaves. Expressed in roots, rosette leaves, cauline leaves, stems and siliques.

It localises to the mitochondrion. The enzyme catalyses octanoyl-[ACP] + L-lysyl-[protein] = N(6)-octanoyl-L-lysyl-[protein] + holo-[ACP] + H(+). Its pathway is protein modification; protein lipoylation via endogenous pathway; protein N(6)-(lipoyl)lysine from octanoyl-[acyl-carrier-protein]: step 1/2. In terms of biological role, catalyzes the transfer of endogenously produced octanoic acid from octanoyl-acyl-carrier-protein onto the lipoyl domains of lipoate-dependent enzymes. Lipoyl-ACP can also act as a substrate although octanoyl-ACP is likely to be the physiological substrate. Together with LIP1 is essential for mitochondrial protein lipoylation during seed development. Required for the lipoylation of mitochondrial 2-oxoglutarate dehydrogenase component E2 proteins in leaves and roots. This chain is Octanoyltransferase LIP2, mitochondrial, found in Arabidopsis thaliana (Mouse-ear cress).